A 198-amino-acid polypeptide reads, in one-letter code: Sensory transduction protein RegX3 (198 aa).

One can recognise a Response regulatory domain in the interval 1-87 (MVTDGPAALA…ELIARIRAVL (87 aa)). Asp23 is subject to 4-aspartylphosphate. The segment at residues 99-198 (DGVLESGPLR…VRGLGYKLES (100 aa)) is a DNA-binding region (ompR/PhoB-type).

In terms of processing, phosphorylated by SenX3.

Its function is as follows. Member of the two-component regulatory system SenX3/RegX3. The polypeptide is Sensory transduction protein RegX3 (rgx3) (Mycobacterium leprae (strain TN)).